A 248-amino-acid chain; its full sequence is Triosephosphate isomerase (248 aa).

9–11 (NWK) provides a ligand contact to substrate. Histidine 94 (electrophile) is an active-site residue. Glutamate 166 (proton acceptor) is an active-site residue. Residues glycine 172, serine 212, and 233 to 234 (GG) contribute to the substrate site.

This sequence belongs to the triosephosphate isomerase family. As to quaternary structure, homodimer.

It localises to the cytoplasm. The catalysed reaction is D-glyceraldehyde 3-phosphate = dihydroxyacetone phosphate. It participates in carbohydrate biosynthesis; gluconeogenesis. Its pathway is carbohydrate degradation; glycolysis; D-glyceraldehyde 3-phosphate from glycerone phosphate: step 1/1. Involved in the gluconeogenesis. Catalyzes stereospecifically the conversion of dihydroxyacetone phosphate (DHAP) to D-glyceraldehyde-3-phosphate (G3P). This chain is Triosephosphate isomerase, found in Clostridium botulinum (strain ATCC 19397 / Type A).